Here is a 574-residue protein sequence, read N- to C-terminus: Arginine--tRNA ligase (574 aa).

The short motif at 124–134 (ANPNGPLHIGH) is the 'HIGH' region element.

Belongs to the class-I aminoacyl-tRNA synthetase family.

The protein localises to the cytoplasm. It catalyses the reaction tRNA(Arg) + L-arginine + ATP = L-arginyl-tRNA(Arg) + AMP + diphosphate. The polypeptide is Arginine--tRNA ligase (Methanococcus aeolicus (strain ATCC BAA-1280 / DSM 17508 / OCM 812 / Nankai-3)).